The following is a 426-amino-acid chain: Vitamin D3 receptor (426 aa).

Positions 21–96 form a DNA-binding region, nuclear receptor; it reads PRICGVCGDR…IGMMKEFILT (76 aa). 8 residues coordinate Zn(2+): C24, C27, C41, C44, C60, C66, C76, and C79. NR C4-type zinc fingers lie at residues 24-44 and 60-84; these read CGVCGDRATGFHFNAMTCEGC and CPFNGDCRITKDNRRHCQACRLKRC. A hinge region spans residues 97–126; sequence DEEVQRKREMILKRKEEEALKDSLRPKLSE. In terms of domain architecture, NR LBD spans 127–422; it reads EQQRIITTLL…LTPLLFEVFG (296 aa). Y143 contacts calcitriol. The disordered stretch occupies residues 147–215; the sequence is YSDFSQFRPP…NEEDSDDPSV (69 aa). Low complexity predominate over residues 175 to 191; the sequence is SFSGNSSSSCSDHCTSS. Over residues 192–204 the composition is skewed to polar residues; that stretch reads PDTMEPTSFSNQD. Position 235 (S235) interacts with calcitriol. The interaction with coactivator LXXLL motif stretch occupies residues 244–262; sequence KMIPGFRDLTPEDQIVLLK. Residues R272, S276, H304, and H396 each contribute to the calcitriol site. Positions 415-423 match the 9aaTAD motif; that stretch reads PLLFEVFGN.

It belongs to the nuclear hormone receptor family. NR1 subfamily. Homodimer in the absence of bound vitamin D3. Heterodimer with RXRA after vitamin D3 binding. Interacts with MED1, NCOA1, NCOA2, NCOA3 and NCOA6 coactivators, leading to a strong increase of transcription of target genes. Interacts with the corepressor NCOR1. Interacts with SNW1. Interacts with IRX4, the interaction does not affect its transactivation activity. Interacts with CRY1. Interacts with CRY2 in a ligand-dependent manner. In terms of processing, ubiquitinated by UBR5, leading to its degradation: UBR5 specifically recognizes and binds ligand-bound VDR when it is not associated with coactivators (NCOAs). In presence of NCOAs, the UBR5-degron is not accessible, preventing its ubiquitination and degradation. Mammary gland, expression increases during lactation. Also found in colon, expression is down-regulated at parturition.

The protein resides in the nucleus. It localises to the cytoplasm. In terms of biological role, nuclear receptor for calcitriol, the active form of vitamin D3 which mediates the action of this vitamin on cells. Enters the nucleus upon vitamin D3 binding where it forms heterodimers with the retinoid X receptor/RXR. The VDR-RXR heterodimers bind to specific response elements on DNA and activate the transcription of vitamin D3-responsive target genes. Plays a central role in calcium homeostasis. Also functions as a receptor for the secondary bile acid lithocholic acid (LCA) and its metabolites. The polypeptide is Vitamin D3 receptor (VDR) (Bos taurus (Bovine)).